The sequence spans 276 residues: Octanoyltransferase LipM (276 aa).

The 216-residue stretch at Gly32–Phe247 folds into the BPL/LPL catalytic domain. Cys149 serves as the catalytic Acyl-thioester intermediate.

This sequence belongs to the octanoyltransferase LipM family. As to quaternary structure, monomer.

It catalyses the reaction octanoyl-[ACP] + L-lysyl-[protein] = N(6)-octanoyl-L-lysyl-[protein] + holo-[ACP] + H(+). The protein operates within protein modification; protein lipoylation via endogenous pathway; protein N(6)-(lipoyl)lysine from octanoyl-[acyl-carrier-protein]. Functionally, catalyzes the transfer of endogenously produced octanoic acid from octanoyl-acyl-carrier-protein onto the lipoyl domain of GcvH, an intermediate carrier during protein lipoylation. The sequence is that of Octanoyltransferase LipM from Exiguobacterium sibiricum (strain DSM 17290 / CCUG 55495 / CIP 109462 / JCM 13490 / 255-15).